Consider the following 139-residue polypeptide: MLIPRRTKHRKQHHPRRTGAASGGTTIAFGDYGIQAVEGGYLTNRQIEAARIAMTRHIKRGGKVWINIYPDRPLTKKPAETRMGSGKGSVEWWIANIKPGRVLFELAGVDEPLAREAMRRAQHKLPMKTRFVRREGGDQ.

Residues 1–17 show a composition bias toward basic residues; sequence MLIPRRTKHRKQHHPRR. Residues 1 to 24 form a disordered region; sequence MLIPRRTKHRKQHHPRRTGAASGG.

Belongs to the universal ribosomal protein uL16 family. In terms of assembly, part of the 50S ribosomal subunit.

Binds 23S rRNA and is also seen to make contacts with the A and possibly P site tRNAs. The sequence is that of Large ribosomal subunit protein uL16 from Beutenbergia cavernae (strain ATCC BAA-8 / DSM 12333 / CCUG 43141 / JCM 11478 / NBRC 16432 / NCIMB 13614 / HKI 0122).